Here is a 42-residue protein sequence, read N- to C-terminus: Photosystem II reaction center protein J (42 aa).

Residues 12-32 (LWFVGMIVGLAALGLLGIFFY) form a helical membrane-spanning segment.

Belongs to the PsbJ family. PSII is composed of 1 copy each of membrane proteins PsbA, PsbB, PsbC, PsbD, PsbE, PsbF, PsbH, PsbI, PsbJ, PsbK, PsbL, PsbM, PsbT, PsbX, PsbY, PsbZ, Psb30/Ycf12, at least 3 peripheral proteins of the oxygen-evolving complex and a large number of cofactors. It forms dimeric complexes.

Its subcellular location is the plastid. The protein resides in the chloroplast thylakoid membrane. Functionally, one of the components of the core complex of photosystem II (PSII). PSII is a light-driven water:plastoquinone oxidoreductase that uses light energy to abstract electrons from H(2)O, generating O(2) and a proton gradient subsequently used for ATP formation. It consists of a core antenna complex that captures photons, and an electron transfer chain that converts photonic excitation into a charge separation. The sequence is that of Photosystem II reaction center protein J from Nephroselmis olivacea (Green alga).